The following is an 867-amino-acid chain: Alanine--tRNA ligase (867 aa).

4 residues coordinate Zn(2+): H558, H562, C660, and H664.

It belongs to the class-II aminoacyl-tRNA synthetase family. Requires Zn(2+) as cofactor.

The protein localises to the cytoplasm. The catalysed reaction is tRNA(Ala) + L-alanine + ATP = L-alanyl-tRNA(Ala) + AMP + diphosphate. In terms of biological role, catalyzes the attachment of alanine to tRNA(Ala) in a two-step reaction: alanine is first activated by ATP to form Ala-AMP and then transferred to the acceptor end of tRNA(Ala). Also edits incorrectly charged Ser-tRNA(Ala) and Gly-tRNA(Ala) via its editing domain. This Fervidobacterium nodosum (strain ATCC 35602 / DSM 5306 / Rt17-B1) protein is Alanine--tRNA ligase.